The primary structure comprises 502 residues: 2-isopropylmalate synthase (502 aa).

Residues D1, H189, H191, and N225 each coordinate Mn(2+). The Pyruvate carboxyltransferase domain maps to 1 to 254 (DGEQALQASL…STNINYKEIY (254 aa)). The tract at residues 379–502 (CLKFFSVQSI…VNKKLQELKK (124 aa)) is regulatory domain.

Belongs to the alpha-IPM synthase/homocitrate synthase family. LeuA type 1 subfamily. Homodimer. Mn(2+) is required as a cofactor.

It localises to the cytoplasm. It carries out the reaction 3-methyl-2-oxobutanoate + acetyl-CoA + H2O = (2S)-2-isopropylmalate + CoA + H(+). The protein operates within amino-acid biosynthesis; L-leucine biosynthesis; L-leucine from 3-methyl-2-oxobutanoate: step 1/4. Its function is as follows. Catalyzes the condensation of the acetyl group of acetyl-CoA with 3-methyl-2-oxobutanoate (2-ketoisovalerate) to form 3-carboxy-3-hydroxy-4-methylpentanoate (2-isopropylmalate). This Buchnera aphidicola subsp. Macrosiphoniella ludovicianae protein is 2-isopropylmalate synthase.